The following is a 366-amino-acid chain: UDP-N-acetylglucosamine--N-acetylmuramyl-(pentapeptide) pyrophosphoryl-undecaprenol N-acetylglucosamine transferase (366 aa).

UDP-N-acetyl-alpha-D-glucosamine is bound by residues 14-16 (TGG), asparagine 125, arginine 168, serine 196, and glutamine 297.

The protein belongs to the glycosyltransferase 28 family. MurG subfamily.

Its subcellular location is the cell inner membrane. The catalysed reaction is di-trans,octa-cis-undecaprenyl diphospho-N-acetyl-alpha-D-muramoyl-L-alanyl-D-glutamyl-meso-2,6-diaminopimeloyl-D-alanyl-D-alanine + UDP-N-acetyl-alpha-D-glucosamine = di-trans,octa-cis-undecaprenyl diphospho-[N-acetyl-alpha-D-glucosaminyl-(1-&gt;4)]-N-acetyl-alpha-D-muramoyl-L-alanyl-D-glutamyl-meso-2,6-diaminopimeloyl-D-alanyl-D-alanine + UDP + H(+). It participates in cell wall biogenesis; peptidoglycan biosynthesis. Cell wall formation. Catalyzes the transfer of a GlcNAc subunit on undecaprenyl-pyrophosphoryl-MurNAc-pentapeptide (lipid intermediate I) to form undecaprenyl-pyrophosphoryl-MurNAc-(pentapeptide)GlcNAc (lipid intermediate II). This Bradyrhizobium diazoefficiens (strain JCM 10833 / BCRC 13528 / IAM 13628 / NBRC 14792 / USDA 110) protein is UDP-N-acetylglucosamine--N-acetylmuramyl-(pentapeptide) pyrophosphoryl-undecaprenol N-acetylglucosamine transferase.